The chain runs to 274 residues: MPKKDALDHLSLGQHTDYPNEYDPKQLQPVPRSLNREPIGLKDKLPFSGVDLWTGYEISWLNANGLPQVAVGYFAVPAESPNLIESKSFKLYLNSFNDSRFDTWEYVQQLMETDLSACAGTPVKVKLKQLSELEGESVATFPGHCIDDQNISISHYDYQPSLLATEQHETEEALHSHLLKSNCLITNQPDWGSVYIHYQGPKLDRAALLAYLVSFRRHNEFHEQCVERIYQDLKALGMKKLTVYARYTRRGGLDINPFRSDFEPALQMQRMARQ.

A disordered region spans residues 1 to 33 (MPKKDALDHLSLGQHTDYPNEYDPKQLQPVPRS). 84–86 (IES) is a binding site for substrate. 86–87 (SK) is a binding site for NADPH. The active-site Thioimide intermediate is the cysteine 183. The active-site Proton donor is the aspartate 190. A substrate-binding site is contributed by 222-223 (HE). An NADPH-binding site is contributed by 250–251 (RG).

This sequence belongs to the GTP cyclohydrolase I family. QueF type 2 subfamily. Homodimer.

The protein resides in the cytoplasm. The enzyme catalyses 7-aminomethyl-7-carbaguanine + 2 NADP(+) = 7-cyano-7-deazaguanine + 2 NADPH + 3 H(+). It participates in tRNA modification; tRNA-queuosine biosynthesis. Its function is as follows. Catalyzes the NADPH-dependent reduction of 7-cyano-7-deazaguanine (preQ0) to 7-aminomethyl-7-deazaguanine (preQ1). The sequence is that of NADPH-dependent 7-cyano-7-deazaguanine reductase from Idiomarina loihiensis (strain ATCC BAA-735 / DSM 15497 / L2-TR).